We begin with the raw amino-acid sequence, 420 residues long: Reticulon-4 receptor-like 2 (420 aa).

A signal peptide spans 1–30 (MLPGLRRLLQGPASACLLLTLLALPSVTPS). 2 disulfides stabilise this stretch: Cys31–Cys37 and Cys35–Cys46. The LRRNT domain occupies 31 to 60 (CPMLCTCYSSPPTVSCQANNFSSVPLSLPP). Residue Asn50 is glycosylated (N-linked (GlcNAc...) asparagine). LRR repeat units follow at residues 61 to 82 (STQR…TFGP), 83 to 104 (NLLT…TFRH), 107 to 129 (ALEE…TFQG), 132 to 153 (RLQS…IFRG), 156 to 177 (SLQY…LFAD), 180 to 201 (NLSH…VFRG), 204 to 225 (SLDR…AFHG), and 228 to 249 (RLTI…ALAD). An N-linked (GlcNAc...) asparagine glycan is attached at Asn93. The N-linked (GlcNAc...) asparagine glycan is linked to Asn236. The 52-residue stretch at 261–312 (NPWACDCRARPLWAWFQRARVSSSDVTCATPPERQGRDLRALRDSDFQACPP) folds into the LRRCT domain. 2 disulfides stabilise this stretch: Cys265/Cys288 and Cys267/Cys310. Residues 286–399 (VTCATPPERQ…CQAPADSRGP (114 aa)) are disordered. The span at 294–306 (RQGRDLRALRDSD) shows a compositional bias: basic and acidic residues. Residues 315 to 327 (PTRPGSRARGNSS) are important for interaction with MAG. Over residues 351–360 (LPAEDSRGRQ) the composition is skewed to basic and acidic residues. Gly398 is lipidated: GPI-anchor amidated glycine. Residues 399–420 (PALSAGLRTPLLCLLPLALHHL) constitute a propeptide, removed in mature form.

Belongs to the Nogo receptor family. As to quaternary structure, interaction with MAG is controversial, and may be indirect. Interacts with MAG. Does not interact with OMG and RTN4. Post-translationally, undergoes zinc metalloproteinase-mediated ectodomain shedding in neuroblastoma cells; is released both as a full-length ectodomain and an N-terminal fragment containing the leucine-rich repeat (LRR) region of the protein. In terms of processing, N-glycosylated. In terms of tissue distribution, detected in brain. Detected in hippocampus neurons (at protein level).

Its subcellular location is the cell membrane. The protein localises to the membrane raft. It is found in the cell projection. It localises to the dendrite. The protein resides in the axon. Its subcellular location is the perikaryon. Functionally, cell surface receptor that plays a functionally redundant role in the inhibition of neurite outgrowth mediated by MAG. Plays a functionally redundant role in postnatal brain development. Contributes to normal axon migration across the brain midline and normal formation of the corpus callosum. Does not seem to play a significant role in regulating axon regeneration in the adult central nervous system. Protects motoneurons against apoptosis; protection against apoptosis is probably mediated by MAG. Like other family members, plays a role in restricting the number dendritic spines and the number of synapses that are formed during brain development. Signaling mediates activation of Rho and downstream reorganization of the actin cytoskeleton. The polypeptide is Reticulon-4 receptor-like 2 (Mus musculus (Mouse)).